Consider the following 335-residue polypeptide: Probable cytosolic iron-sulfur protein assembly protein Ciao1 (335 aa).

WD repeat units follow at residues 12-51 (GHKG…WSTK), 57-96 (GHKR…FECN), 101-140 (GHEN…EFEC), 146-185 (PHTQ…SDWD), 192-231 (SHTS…NDAG), 250-289 (QHSR…KRDE), and 301-335 (AHEQ…KMLD).

It belongs to the WD repeat CIA1 family.

Essential component of the cytosolic iron-sulfur (Fe/S) protein assembly machinery. Required for the maturation of extramitochondrial Fe/S proteins. This chain is Probable cytosolic iron-sulfur protein assembly protein Ciao1, found in Drosophila willistoni (Fruit fly).